Consider the following 503-residue polypeptide: MATGELALVSSLFIVVVFLLLGAVAREASALTRHDFPEGFVFGAGSSAFQVEGAAAEDGRKPSIWDTFINQGYMPDGSNADVSADQYHHYKEDVKLMYDMGLDAYRFSIAWPRLIPDGRGEINPKGLEYYNNLIDELIMHGIQPHVTIYHFDLPQALQDEYGGILSPRFIEDYSAYAEVCFKNFGDRVKHWATFNQPNIEPIGGFDAGDRPPRRCSYPFGTNCTGGDSSTEPYIVAHHLLLAHASAVSIYRQKYQAIQGGQIGITLMVRWHEPYTDKTADAAAAIRMNEFHIGWFLHPLVHGDYPPVMRSRVGVRLPSITASDSEKIRGSFDFIGINHYYVIFVQSIDANEQKLRDYYIDAGVQGEDDTENIQCHSWSLGKVLNHLKLEYGNPPVMIHENGYSDSPDIFGKINYNDDFRSAFLQGYLEALYLSVRNGSNTRGYFVWSMFDMFEFLYGYRLRFGLCGVDFTAAARTRYLKNSARWYSGFLRGGELRPEKSYATL.

A signal peptide spans 1-30 (MATGELALVSSLFIVVVFLLLGAVAREASA). A beta-D-glucoside is bound by residues glutamine 50, histidine 150, and 195–196 (NQ). A disulfide bridge connects residues cysteine 215 and cysteine 223. Asparagine 222 is a glycosylation site (N-linked (GlcNAc...) asparagine). A beta-D-glucoside contacts are provided by tyrosine 339 and glutamate 399. Glutamate 399 (nucleophile) is an active-site residue. The N-linked (GlcNAc...) asparagine glycan is linked to asparagine 436. Residues tryptophan 446, 453-454 (EF), and phenylalanine 462 each bind a beta-D-glucoside.

This sequence belongs to the glycosyl hydrolase 1 family.

The polypeptide is Probable inactive beta-glucosidase 33 (BGLU33) (Oryza sativa subsp. japonica (Rice)).